A 291-amino-acid chain; its full sequence is Probable prolyl 4-hydroxylase 12 (291 aa).

Over 1–156 (MACLSRIFLI…GEEPSSVLHE (156 aa)) the chain is Cytoplasmic. One can recognise a Fe2OG dioxygenase domain in the interval 125-239 (NGGSIKVRSY…LLVATKLIYA (115 aa)). Residues Lys142 and Asp144 each contribute to the Fe cation site. The chain crosses the membrane as a helical; Signal-anchor for type II membrane protein span at residues 157–173 (SLLATVVLYLSNTTQGG). Residues 174–291 (ELLFPNSEMK…GTCRKSCNAC (118 aa)) lie on the Lumenal side of the membrane. Asn211 carries N-linked (GlcNAc...) asparagine glycosylation. His220 is a binding site for Fe cation. One can recognise a ShKT domain in the interval 251 to 291 (CSDEDENCGRWAKLGECKKNPVYMIGSPDYYGTCRKSCNAC). Disulfide bonds link Cys251–Cys291, Cys258–Cys284, and Cys267–Cys288.

This sequence belongs to the P4HA family. The cofactor is Fe(2+). L-ascorbate serves as cofactor.

The protein localises to the endoplasmic reticulum membrane. It carries out the reaction L-prolyl-[collagen] + 2-oxoglutarate + O2 = trans-4-hydroxy-L-prolyl-[collagen] + succinate + CO2. Catalyzes the post-translational formation of 4-hydroxyproline in -Xaa-Pro-Gly- sequences in proline-rich peptide sequences of plant glycoproteins and other proteins. Hydroxyprolines are important constituent of many plant cell wall glycoproteins such as extensins, hydroxyproline-rich glycoproteins, lectins and arabinogalactan proteins. This chain is Probable prolyl 4-hydroxylase 12, found in Arabidopsis thaliana (Mouse-ear cress).